The sequence spans 455 residues: Two-component system WalR/WalK regulatory protein YycH (455 aa).

Residues 1–7 (MKRENIK) are Cytoplasmic-facing. A helical transmembrane segment spans residues 8–28 (TILLTVLVVISLVFTWGIWTF). Over 29 to 455 (QPNFSEGSSS…RKEGANSGVE (427 aa)) the chain is Extracellular. Asp-69, Asp-70, Gly-115, Gly-117, and Ser-119 together coordinate Ca(2+).

Homodimer. Interacts with WalK and YycI.

The protein localises to the cell membrane. Together with YycI, regulates the activity of the two-component system WalR/WalK. This is Two-component system WalR/WalK regulatory protein YycH (yycH) from Bacillus subtilis (strain 168).